Reading from the N-terminus, the 647-residue chain is Golgi-associated RAB2B interactor protein 3 (647 aa).

Residues 188–202 (IPTADTSTETKSTLV) show a composition bias toward polar residues. Disordered regions lie at residues 188-220 (IPTA…TSQD), 267-296 (TAGA…GSAR), 361-384 (SKSP…QERS), and 465-573 (RDGS…GFVS). Residues 205–214 (IHGEGDRDSK) show a composition bias toward basic and acidic residues. Over residues 361–378 (SKSPGSGQVATGLTGTAS) the composition is skewed to polar residues. Ser378 carries the phosphoserine modification. The segment covering 478–491 (TQKEKRERRESDRK) has biased composition (basic and acidic residues). Residues 492–501 (GSRKSSHHQR) are compositionally biased toward basic residues. The Bipartite nuclear localization signal motif lies at 494–511 (RKSSHHQRTGASRHSSSK). The span at 528–556 (KTREDKKEKGRGSLRDQRHSSSYRSESRT) shows a compositional bias: basic and acidic residues. Residues Ser634 and Ser636 each carry the phosphoserine modification.

It belongs to the GARIN family. Interacts (via N-terminus) with RAB2B (in GTP-bound form). Interacts with FRG1.

The protein localises to the golgi apparatus. It is found in the nucleus. It localises to the cajal body. Its function is as follows. May be involved in RNA biogenesis. This chain is Golgi-associated RAB2B interactor protein 3 (Garin3), found in Rattus norvegicus (Rat).